A 233-amino-acid polypeptide reads, in one-letter code: MRMSCNGCRVLRKGCSENCSIRPCLQWIKSAESQANATVFLAKFYGRAGLMNLLNTGPDHLRPAIFRSLLYEACGRIVNPIYGSVGLLWSGNWHLCQAAVEAVMRGSPVTPIACDAAVTGQAPPFNNKLCDIRHVSSRDENVKRRSRGACKEERNVRSLSHESSLSHESPVSSEETTTEEPKTWIGLELTLGLEPLARGNHVVVPMKKRKLERCGTSEDEDTCKIELGLVCSE.

The region spanning M3–V109 is the LOB domain. Over residues K143–S160 the composition is skewed to basic and acidic residues. The disordered stretch occupies residues K143–T183. Low complexity predominate over residues H161–E175.

This sequence belongs to the LOB domain-containing protein family. As to expression, expressed in roots and flowers.

The chain is LOB domain-containing protein 40 (LBD40) from Arabidopsis thaliana (Mouse-ear cress).